Here is a 91-residue protein sequence, read N- to C-terminus: Small ribosomal subunit protein uS19 (91 aa).

This sequence belongs to the universal ribosomal protein uS19 family.

In terms of biological role, protein S19 forms a complex with S13 that binds strongly to the 16S ribosomal RNA. This chain is Small ribosomal subunit protein uS19, found in Dechloromonas aromatica (strain RCB).